Here is a 440-residue protein sequence, read N- to C-terminus: tRNA-2-methylthio-N(6)-dimethylallyladenosine synthase (440 aa).

The region spanning 5-121 is the MTTase N-terminal domain; sequence KKLYIKTYGC…LPEMEAKAGT (117 aa). The [4Fe-4S] cluster site is built by cysteine 14, cysteine 50, cysteine 84, cysteine 159, cysteine 163, and cysteine 166. The 234-residue stretch at 145 to 378 folds into the Radical SAM core domain; the sequence is AKRGPTAFLT…LTRQQREVQD (234 aa). The region spanning 378 to 440 is the TRAM domain; that stretch reads DSMVGRELGV…ANSLAGELID (63 aa).

Belongs to the methylthiotransferase family. MiaB subfamily. Monomer. Requires [4Fe-4S] cluster as cofactor.

The protein resides in the cytoplasm. The catalysed reaction is N(6)-dimethylallyladenosine(37) in tRNA + (sulfur carrier)-SH + AH2 + 2 S-adenosyl-L-methionine = 2-methylsulfanyl-N(6)-dimethylallyladenosine(37) in tRNA + (sulfur carrier)-H + 5'-deoxyadenosine + L-methionine + A + S-adenosyl-L-homocysteine + 2 H(+). In terms of biological role, catalyzes the methylthiolation of N6-(dimethylallyl)adenosine (i(6)A), leading to the formation of 2-methylthio-N6-(dimethylallyl)adenosine (ms(2)i(6)A) at position 37 in tRNAs that read codons beginning with uridine. The protein is tRNA-2-methylthio-N(6)-dimethylallyladenosine synthase of Ruegeria sp. (strain TM1040) (Silicibacter sp.).